A 669-amino-acid chain; its full sequence is Histone-lysine N-methyltransferase, H3 lysine-9 specific SUVH3 (669 aa).

2 disordered regions span residues 56 to 127 (YSSF…EKKT) and 270 to 290 (ESLIYSGQGGNADKNRQASDQ). Composition is skewed to polar residues over residues 65–82 (QQPTHDTPDLNQTQNTPI) and 93–107 (RTPTKTNGPSSSSGT). The segment at residues 108-120 (KRGVGRPKGTTSV) is a DNA-binding region (a.T hook). The YDG domain maps to 208–355 (GTVPGIEVGD…CNTFKYKLVR (148 aa)). In terms of domain architecture, Pre-SET spans 430–491 (IGCSCSGSCS…SCKNRVIQTG (62 aa)). Cys-432, Cys-434, Cys-438, Cys-445, Cys-447, Cys-473, Cys-477, Cys-479, and Cys-483 together coordinate Zn(2+). One can recognise an SET domain in the interval 494-638 (SRLEVFKTRN…PMAELTYDYG (145 aa)). S-adenosyl-L-methionine contacts are provided by residues 504 to 506 (RGW), Asp-540, Tyr-542, Arg-592, and 595 to 596 (NH). The Zn(2+) site is built by Cys-598, Cys-657, Cys-659, and Cys-664. One can recognise a Post-SET domain in the interval 653–669 (GQRTCLCGSEQCRGSFG).

It belongs to the class V-like SAM-binding methyltransferase superfamily. Histone-lysine methyltransferase family. Suvar3-9 subfamily. Expressed in leaves stems and flowers.

The protein localises to the nucleus. Its subcellular location is the chromosome. It localises to the centromere. The enzyme catalyses L-lysyl(9)-[histone H3] + S-adenosyl-L-methionine = N(6)-methyl-L-lysyl(9)-[histone H3] + S-adenosyl-L-homocysteine + H(+). In terms of biological role, histone methyltransferase. Methylates 'Lys-9' of histone H3. H3 'Lys-9' methylation represents a specific tag for epigenetic transcriptional repression. The sequence is that of Histone-lysine N-methyltransferase, H3 lysine-9 specific SUVH3 (SUVH3) from Arabidopsis thaliana (Mouse-ear cress).